Reading from the N-terminus, the 316-residue chain is Taste receptor type 2 member 3 (316 aa).

The Extracellular segment spans residues 1–6 (MMGLTE). A helical membrane pass occupies residues 7–27 (GVFLILSGTQFTLGILVNCFI). Residues 28-42 (ELVNGSSWFKTKRMS) lie on the Cytoplasmic side of the membrane. Residues 43–63 (LSDFIITTLALLRIILLCIIL) form a helical membrane-spanning segment. The Extracellular segment spans residues 64-94 (TDSFLIEFSPNTHDSGIIMQIIDVSWTFTNH). The helical transmembrane segment at 95–115 (LSIWLATCLGVLYCLKIASFS) threads the bilayer. The Cytoplasmic portion of the chain corresponds to 116-128 (HPTFLWLKWRVSR). A helical membrane pass occupies residues 129 to 149 (VMVWMLLGALLLSCGSTASLI). At 150–186 (NEFKLYSVFRGIEATRNVTEHFRKKRSEYYLIHVLGT) the chain is on the extracellular side. N166 carries an N-linked (GlcNAc...) asparagine glycan. The chain crosses the membrane as a helical span at residues 187–207 (LWYLPPLIVSLASYSLLIFSL). Topologically, residues 208-234 (GRHTRQMLQNGTSSRDPTTEAHKRAIR) are cytoplasmic. Residues 235-255 (IILSFFFLFLLYFLAFLIASF) form a helical membrane-spanning segment. Residues 256-266 (GNFLPKTKMAK) lie on the Extracellular side of the membrane. The chain crosses the membrane as a helical span at residues 267-287 (MIGEVMTMFYPAGHSFILILG). Topologically, residues 288-316 (NSKLKQTFVVMLRCESGHLKPGSKGPIFS) are cytoplasmic.

It belongs to the G-protein coupled receptor T2R family. In terms of tissue distribution, expressed in subsets of taste receptor cells of the tongue and palate epithelium and exclusively in gustducin-positive cells. Expressed in the antrum and fundus (part of the stomach), duodenum and in gastric endocrine cells.

It localises to the membrane. Gustducin-coupled receptor implicated in the perception of bitter compounds in the oral cavity and the gastrointestinal tract. Signals through PLCB2 and the calcium-regulated cation channel TRPM5. This chain is Taste receptor type 2 member 3 (TAS2R3), found in Homo sapiens (Human).